A 482-amino-acid polypeptide reads, in one-letter code: 2-succinylbenzoate--CoA ligase (482 aa).

It belongs to the ATP-dependent AMP-binding enzyme family. MenE subfamily.

The catalysed reaction is 2-succinylbenzoate + ATP + CoA = 2-succinylbenzoyl-CoA + AMP + diphosphate. It functions in the pathway quinol/quinone metabolism; 1,4-dihydroxy-2-naphthoate biosynthesis; 1,4-dihydroxy-2-naphthoate from chorismate: step 5/7. It participates in quinol/quinone metabolism; menaquinone biosynthesis. Functionally, converts 2-succinylbenzoate (OSB) to 2-succinylbenzoyl-CoA (OSB-CoA). The chain is 2-succinylbenzoate--CoA ligase from Bacillus anthracis (strain A0248).